Reading from the N-terminus, the 571-residue chain is MRTSKYLFSTLKETPNDAQVVSHQLMLRAGMIRPMASGLYNWLPSGIRVLEKVKNIIREEMNKSGAIEVLMPVVQPAELWQESGRWEQYGLELLRFNDRGNRDFVLGPTHEEVITDLVRREVSSYKQLPLNLYQIQTKFRDEVRPRFGVMRSREFIMKDAYSFHTTKESLQATYDVMYQTYSNIFTRLGLDFRAVQADTGSIGGSASHEFQVLASSGEDDVVFSTESDYAANIELAEAIAVGERAQPGAAMQLVDTPNAKTIAELVEQFNLPIEKTVKTLIVKGATEEQPLVALIIRGDHDLNEIKAEKLPEVASPFEFADEADIKAKIGAGVGSLGPVNLNIPVIIDRSVALMSDFGAGANIDGKHYFNINWERDVALPKIADLRNVVEGDPSPDGKGTLLIKRGIEVGHIFQLGQKYSEAMNATVQGEDGKPLVMTMGCYGIGVTRVVASAIEQHHDERGIIWPSDAIAPFTVAIVPMNMHKSESVQAYAEELYQTLLAQGVEVIFDDRKERPGVMFADMELIGVPHMVIIGEKNLENGEIEYKNRRTSEKQMIAKDQLLDFLKANVNV.

The protein belongs to the class-II aminoacyl-tRNA synthetase family. ProS type 1 subfamily. Homodimer.

It is found in the cytoplasm. The catalysed reaction is tRNA(Pro) + L-proline + ATP = L-prolyl-tRNA(Pro) + AMP + diphosphate. Its function is as follows. Catalyzes the attachment of proline to tRNA(Pro) in a two-step reaction: proline is first activated by ATP to form Pro-AMP and then transferred to the acceptor end of tRNA(Pro). As ProRS can inadvertently accommodate and process non-cognate amino acids such as alanine and cysteine, to avoid such errors it has two additional distinct editing activities against alanine. One activity is designated as 'pretransfer' editing and involves the tRNA(Pro)-independent hydrolysis of activated Ala-AMP. The other activity is designated 'posttransfer' editing and involves deacylation of mischarged Ala-tRNA(Pro). The misacylated Cys-tRNA(Pro) is not edited by ProRS. This chain is Proline--tRNA ligase, found in Mannheimia succiniciproducens (strain KCTC 0769BP / MBEL55E).